The chain runs to 130 residues: Small ribosomal subunit protein uS11c (130 aa).

This sequence belongs to the universal ribosomal protein uS11 family. In terms of assembly, part of the 30S ribosomal subunit.

The protein localises to the plastid. It is found in the chloroplast. The polypeptide is Small ribosomal subunit protein uS11c (Chaetosphaeridium globosum (Charophycean green alga)).